Here is a 427-residue protein sequence, read N- to C-terminus: N-acylglucosamine 2-epimerase (427 aa).

Positions 195–216 are leucine-zipper; the sequence is LLNLVEQLGEADEELAGKYAEL.

This sequence belongs to the N-acylglucosamine 2-epimerase family. In terms of assembly, homodimer. Forms a heterodimer with renin and inhibits its activity.

It carries out the reaction an N-acyl-D-glucosamine = an N-acyl-D-mannosamine. It participates in amino-sugar metabolism; N-acetylneuraminate degradation. Inhibited by N-ethylmaleimide, 5,5'-dithiobis-2-nitrobenzoate and iodoacetic acid. Its function is as follows. Catalyzes the interconversion of N-acetylglucosamine to N-acetylmannosamine. Involved in the N-glycolylneuraminic acid (Neu5Gc) degradation pathway: although human is not able to catalyze formation of Neu5Gc due to the inactive CMAHP enzyme, Neu5Gc is present in food and must be degraded. The sequence is that of N-acylglucosamine 2-epimerase (RENBP) from Homo sapiens (Human).